The chain runs to 240 residues: Leucyl/phenylalanyl-tRNA--protein transferase (240 aa).

The protein belongs to the L/F-transferase family.

The protein resides in the cytoplasm. The catalysed reaction is N-terminal L-lysyl-[protein] + L-leucyl-tRNA(Leu) = N-terminal L-leucyl-L-lysyl-[protein] + tRNA(Leu) + H(+). It carries out the reaction N-terminal L-arginyl-[protein] + L-leucyl-tRNA(Leu) = N-terminal L-leucyl-L-arginyl-[protein] + tRNA(Leu) + H(+). It catalyses the reaction L-phenylalanyl-tRNA(Phe) + an N-terminal L-alpha-aminoacyl-[protein] = an N-terminal L-phenylalanyl-L-alpha-aminoacyl-[protein] + tRNA(Phe). Functionally, functions in the N-end rule pathway of protein degradation where it conjugates Leu, Phe and, less efficiently, Met from aminoacyl-tRNAs to the N-termini of proteins containing an N-terminal arginine or lysine. The chain is Leucyl/phenylalanyl-tRNA--protein transferase from Maridesulfovibrio salexigens (strain ATCC 14822 / DSM 2638 / NCIMB 8403 / VKM B-1763) (Desulfovibrio salexigens).